The following is a 989-amino-acid chain: DEAD-box ATP-dependent RNA helicase 45 (989 aa).

2 stretches are compositionally biased toward basic and acidic residues: residues 1-39 (MLEK…KRCD) and 64-101 (RDSK…EKEK). Disordered stretches follow at residues 1-248 (MLEK…AADE) and 305-330 (QGED…DDEE). Positions 88 to 182 (LKRDRERRER…ELKRQNEEAQ (95 aa)) form a coiled coil. Residue S119 is modified to Phosphoserine. A compositionally biased stretch (basic and acidic residues) spans 134 to 179 (SRHGDDDVEKKTRDEQVEDEQKQLAEEVEKRRRRVQEWQELKRQNE). S200 carries the phosphoserine modification. Positions 203–222 (EVKSDSEMDVDRDTKLENGG) are enriched in basic and acidic residues. Residues 230-239 (ENETAVTVSE) show a composition bias toward polar residues. The segment covering 321 to 330 (DPSLDEDDEE) has biased composition (acidic residues). Residues 396–424 (QFWHQTGLTSKILDTLKKLNYEKPMPIQA) carry the Q motif motif. In terms of domain architecture, Helicase ATP-binding spans 427–605 (LPIIMSGRDC…RKVLNKPVEI (179 aa)). ATP is bound at residue 440 to 447 (AKTGSGKT). A DEAD box motif is present at residues 553-556 (DEAD). Positions 590–748 (QVETLARKVL…PVPDDVKAVA (159 aa)) constitute a Helicase C-terminal domain.

The protein belongs to the DEAD box helicase family. DDX46/PRP5 subfamily.

The catalysed reaction is ATP + H2O = ADP + phosphate + H(+). The protein is DEAD-box ATP-dependent RNA helicase 45 (RH45) of Arabidopsis thaliana (Mouse-ear cress).